The following is a 448-amino-acid chain: Bifunctional protein GlmU (448 aa).

Positions 1–232 are pyrophosphorylase; sequence MTARSSLTIV…EDEVRGINTK (232 aa). Residues 11-14, lysine 25, glutamine 78, and 83-84 each bind UDP-N-acetyl-alpha-D-glucosamine; these read LAAG and GT. Residue aspartate 108 coordinates Mg(2+). UDP-N-acetyl-alpha-D-glucosamine-binding residues include glycine 144, glutamate 158, asparagine 173, and asparagine 230. Asparagine 230 contributes to the Mg(2+) binding site. The tract at residues 233–253 is linker; sequence AQLAQAEAAMQARLRQAAMDA. An N-acetyltransferase region spans residues 254 to 448; sequence GVTLIAPETV…FRNAKLRQTK (195 aa). Residues arginine 319 and lysine 337 each coordinate UDP-N-acetyl-alpha-D-glucosamine. Catalysis depends on histidine 349, which acts as the Proton acceptor. The UDP-N-acetyl-alpha-D-glucosamine site is built by tyrosine 352 and asparagine 363. Acetyl-CoA is bound by residues alanine 366, 372–373, serine 409, and arginine 426; that span reads NY. Residues 427–448 form a disordered region; it reads SPQTTKEGAAARFRNAKLRQTK.

It in the N-terminal section; belongs to the N-acetylglucosamine-1-phosphate uridyltransferase family. This sequence in the C-terminal section; belongs to the transferase hexapeptide repeat family. Homotrimer. The cofactor is Mg(2+).

The protein resides in the cytoplasm. The catalysed reaction is alpha-D-glucosamine 1-phosphate + acetyl-CoA = N-acetyl-alpha-D-glucosamine 1-phosphate + CoA + H(+). It carries out the reaction N-acetyl-alpha-D-glucosamine 1-phosphate + UTP + H(+) = UDP-N-acetyl-alpha-D-glucosamine + diphosphate. It functions in the pathway nucleotide-sugar biosynthesis; UDP-N-acetyl-alpha-D-glucosamine biosynthesis; N-acetyl-alpha-D-glucosamine 1-phosphate from alpha-D-glucosamine 6-phosphate (route II): step 2/2. It participates in nucleotide-sugar biosynthesis; UDP-N-acetyl-alpha-D-glucosamine biosynthesis; UDP-N-acetyl-alpha-D-glucosamine from N-acetyl-alpha-D-glucosamine 1-phosphate: step 1/1. Its pathway is bacterial outer membrane biogenesis; LPS lipid A biosynthesis. In terms of biological role, catalyzes the last two sequential reactions in the de novo biosynthetic pathway for UDP-N-acetylglucosamine (UDP-GlcNAc). The C-terminal domain catalyzes the transfer of acetyl group from acetyl coenzyme A to glucosamine-1-phosphate (GlcN-1-P) to produce N-acetylglucosamine-1-phosphate (GlcNAc-1-P), which is converted into UDP-GlcNAc by the transfer of uridine 5-monophosphate (from uridine 5-triphosphate), a reaction catalyzed by the N-terminal domain. This chain is Bifunctional protein GlmU, found in Bradyrhizobium sp. (strain ORS 278).